The chain runs to 106 residues: Large ribosomal subunit protein uL23 (106 aa).

The protein belongs to the universal ribosomal protein uL23 family. As to quaternary structure, part of the 50S ribosomal subunit. Contacts protein L29, and trigger factor when it is bound to the ribosome.

One of the early assembly proteins it binds 23S rRNA. One of the proteins that surrounds the polypeptide exit tunnel on the outside of the ribosome. Forms the main docking site for trigger factor binding to the ribosome. The polypeptide is Large ribosomal subunit protein uL23 (Neisseria meningitidis serogroup A / serotype 4A (strain DSM 15465 / Z2491)).